We begin with the raw amino-acid sequence, 679 residues long: Methyl-accepting chemotaxis protein McpB (679 aa).

3 divergent domain HAMP regions span residues 8 to 56 (AVAQ…RQLR), 63 to 112 (QQVE…AAHI), and 111 to 156 (HIAV…ERLR). Residues 171–213 (YNARIKSALDNVSANVMIADNDLNIIYMNRTVSEMLGRAEADI) enclose the PAS domain. Histidine 234 provides a ligand contact to heme. Residues 285–287 (DRT) carry the DxT. Important for signal propagation motif. The segment at 289–332 (EHRAEQEVSQLVQAAAAGDFSKRVEEAGKEGFFLRLAKDLNSLV) is divergent domain HAMP 4. Positions 333 to 385 (DTADRGLRDVSRMLGALAQGDLTQRIEADYQGTFGQLKDFSNDTAQSLSRMLG) constitute an HAMP 5 domain. The region spanning 390–619 (AADTINTAAS…EAAAAAEAMQ (230 aa)) is the Methyl-accepting transducer domain. 2 disordered regions span residues 405–425 (NAEL…TASS) and 644–679 (ASAR…WEEF). Over residues 411–425 (RTEQQASSLEETASS) the composition is skewed to polar residues. The span at 670 to 679 (ARKEDGWEEF) shows a compositional bias: basic and acidic residues. A GWEEF pentapeptide. Important for methylation by CheR2 motif is present at residues 675 to 679 (GWEEF).

This sequence belongs to the methyl-accepting chemotaxis (MCP) protein family. In terms of assembly, homodimer. The PAS domains form dimers in the presence and absence of oxygen. Interacts with the methyltransferase CheR2 via the C-terminal McpB pentapeptide GWEEF. Interacts with the methylesterase/gutaminase CheB2, which also binds to the GWEEF pentapeptide. In terms of processing, methylated by CheR2, but not by CheR1, CheR3 or WspC. Demethylated by CheB2. In vitro, can be methylated by E.coli CheR.

The protein resides in the cytoplasm. Functionally, chemoreceptor that plays a critical role in the virulence and pathogenesis of P.aeruginosa in a variety of hosts. Probably acts through oxygen sensing. Uses a heme-based sensor. Could be involved in chemotaxis. When expressed in E.coli, is able to sense and mediate repellent responses to oxygen, carbon monoxide and nitric oxide. This Pseudomonas aeruginosa (strain ATCC 15692 / DSM 22644 / CIP 104116 / JCM 14847 / LMG 12228 / 1C / PRS 101 / PAO1) protein is Methyl-accepting chemotaxis protein McpB.